We begin with the raw amino-acid sequence, 187 residues long: Signal peptidase complex catalytic subunit SEC11 (187 aa).

Over 1 to 14 (MLSSLSPYMANPRN) the chain is Cytoplasmic. Residues 15-33 (TLSQVLNFGLVLSSAFMVW) traverse the membrane as a helical; Signal-anchor for type II membrane protein segment. The Lumenal segment spans residues 34 to 187 (KTLSVITNST…MGLMVMLQRE (154 aa)). An N-linked (GlcNAc...) asparagine glycan is attached at Asn41. Catalysis depends on charge relay system residues Ser53 and His92. Asn125 is a glycosylation site (N-linked (GlcNAc...) asparagine). Asp129 acts as the Charge relay system in catalysis. The C-terminal short (CTS) helix stretch occupies residues 173-184 (VLLGFMGLMVML).

It belongs to the peptidase S26B family. Component of the signal peptidase complex (SPC) composed of a catalytic subunit SEC11 and three accessory subunits SPC1, SPC2 and SPC3. The complex induces a local thinning of the ER membrane which is used to measure the length of the signal peptide (SP) h-region of protein substrates. This ensures the selectivity of the complex towards h-regions shorter than 18-20 amino acids. SPC associates with the translocon complex.

The protein localises to the endoplasmic reticulum membrane. The enzyme catalyses Cleavage of hydrophobic, N-terminal signal or leader sequences from secreted and periplasmic proteins.. Functionally, catalytic component of the signal peptidase complex (SPC) which catalyzes the cleavage of N-terminal signal sequences from nascent proteins as they are translocated into the lumen of the endoplasmic reticulum. Specifically cleaves N-terminal signal peptides that contain a hydrophobic alpha-helix (h-region) shorter than 18-20 amino acids. The chain is Signal peptidase complex catalytic subunit SEC11 (SEC11) from Ajellomyces capsulatus (strain H88) (Darling's disease fungus).